We begin with the raw amino-acid sequence, 354 residues long: Protein-glutamate methylesterase/protein-glutamine glutaminase 2 (354 aa).

The region spanning 5-122 (RVLIVDDSAL…SLKIKEVAEE (118 aa)) is the Response regulatory domain. A 4-aspartylphosphate modification is found at Asp56. In terms of domain architecture, CheB-type methylesterase spans 159-354 (PDTSFKKLIL…IADRIVELVR (196 aa)). Residues Ser172, His199, and Asp298 contribute to the active site.

The protein belongs to the CheB family. Phosphorylated by CheA. Phosphorylation of the N-terminal regulatory domain activates the methylesterase activity.

The protein resides in the cytoplasm. It carries out the reaction [protein]-L-glutamate 5-O-methyl ester + H2O = L-glutamyl-[protein] + methanol + H(+). The catalysed reaction is L-glutaminyl-[protein] + H2O = L-glutamyl-[protein] + NH4(+). Involved in chemotaxis. Part of a chemotaxis signal transduction system that modulates chemotaxis in response to various stimuli. Catalyzes the demethylation of specific methylglutamate residues introduced into the chemoreceptors (methyl-accepting chemotaxis proteins or MCP) by CheR. Also mediates the irreversible deamidation of specific glutamine residues to glutamic acid. In Carboxydothermus hydrogenoformans (strain ATCC BAA-161 / DSM 6008 / Z-2901), this protein is Protein-glutamate methylesterase/protein-glutamine glutaminase 2.